The primary structure comprises 196 residues: MTYNPRDHYFRKAKQENFAARSVFKLEEIDQKFKMFKPGQVVLDLGASPGSWSQYASKMAGEKGRVLGVDLSPVTVKLKNAVFIQADLRDLNLEDIFKEHGFVPPFDIVMSDMAPKTTGIRMTDQARSMELCELALDVARRFLKKDGHFVCKLFHSDDFGKLRDEMKKTFAKVEAVKPDSTRKISKEIFLVGLSKK.

Positions 50, 52, 70, 87, and 112 each coordinate S-adenosyl-L-methionine. The Proton acceptor role is filled by Lys152.

It belongs to the class I-like SAM-binding methyltransferase superfamily. RNA methyltransferase RlmE family.

It is found in the cytoplasm. It carries out the reaction uridine(2552) in 23S rRNA + S-adenosyl-L-methionine = 2'-O-methyluridine(2552) in 23S rRNA + S-adenosyl-L-homocysteine + H(+). Specifically methylates the uridine in position 2552 of 23S rRNA at the 2'-O position of the ribose in the fully assembled 50S ribosomal subunit. The chain is Ribosomal RNA large subunit methyltransferase E from Bdellovibrio bacteriovorus (strain ATCC 15356 / DSM 50701 / NCIMB 9529 / HD100).